The primary structure comprises 483 residues: Probable gamma-aminobutyrate transaminase 4 (483 aa).

Pyridoxal 5'-phosphate is bound at residue 138–139 (GS). Residue Tyr171 coordinates substrate. Asp278 lines the pyridoxal 5'-phosphate pocket. Residue Lys307 participates in substrate binding. At Lys307 the chain carries N6-(pyridoxal phosphate)lysine.

It belongs to the class-III pyridoxal-phosphate-dependent aminotransferase family. As to expression, not detected in roots, stems, flowers or leaves of healthy plants.

The protein resides in the cytoplasm. It carries out the reaction 4-aminobutanoate + pyruvate = succinate semialdehyde + L-alanine. The enzyme catalyses 4-aminobutanoate + glyoxylate = succinate semialdehyde + glycine. In terms of biological role, transaminase that degrades gamma-amino butyric acid (GABA). The polypeptide is Probable gamma-aminobutyrate transaminase 4 (GABA-T) (Oryza sativa subsp. japonica (Rice)).